Consider the following 286-residue polypeptide: Probable xyloglucan endotransglucosylase/hydrolase protein 23 (286 aa).

An N-terminal signal peptide occupies residues 1 to 24 (MAMISYSTIVVALLASFMICSVSA). Residues 25-214 (NFQRDVEITW…WSKAPFTASY (190 aa)) form the GH16 domain. The Nucleophile role is filled by glutamate 100. Catalysis depends on glutamate 104, which acts as the Proton donor. A xyloglucan-binding site is contributed by glutamate 104. Residue asparagine 108 is glycosylated (N-linked (GlcNAc...) asparagine). Xyloglucan is bound by residues 117–119 (HTN), 127–129 (DRE), 193–194 (EW), and glycine 198. Cysteine 222 and cysteine 231 form a disulfide bridge. The N-linked (GlcNAc...) asparagine glycan is linked to asparagine 233. Cysteine 269 and cysteine 283 form a disulfide bridge. Arginine 274 contributes to the xyloglucan binding site.

The protein belongs to the glycosyl hydrolase 16 family. XTH group 2 subfamily. Post-translationally, contains at least one intrachain disulfide bond essential for its enzymatic activity.

It localises to the secreted. It is found in the cell wall. The protein localises to the extracellular space. The protein resides in the apoplast. It catalyses the reaction breaks a beta-(1-&gt;4) bond in the backbone of a xyloglucan and transfers the xyloglucanyl segment on to O-4 of the non-reducing terminal glucose residue of an acceptor, which can be a xyloglucan or an oligosaccharide of xyloglucan.. Functionally, catalyzes xyloglucan endohydrolysis (XEH) and/or endotransglycosylation (XET). Cleaves and religates xyloglucan polymers, an essential constituent of the primary cell wall, and thereby participates in cell wall construction of growing tissues. The chain is Probable xyloglucan endotransglucosylase/hydrolase protein 23 (XTH23) from Arabidopsis thaliana (Mouse-ear cress).